Consider the following 427-residue polypeptide: Serine hydroxymethyltransferase (427 aa).

(6S)-5,6,7,8-tetrahydrofolate is bound by residues Leu118 and 122–124 (GHL). Residue Lys227 is modified to N6-(pyridoxal phosphate)lysine. 351 to 353 (SPF) is a (6S)-5,6,7,8-tetrahydrofolate binding site.

Belongs to the SHMT family. As to quaternary structure, homodimer. Requires pyridoxal 5'-phosphate as cofactor.

The protein localises to the cytoplasm. It catalyses the reaction (6R)-5,10-methylene-5,6,7,8-tetrahydrofolate + glycine + H2O = (6S)-5,6,7,8-tetrahydrofolate + L-serine. It participates in one-carbon metabolism; tetrahydrofolate interconversion. The protein operates within amino-acid biosynthesis; glycine biosynthesis; glycine from L-serine: step 1/1. Its function is as follows. Catalyzes the reversible interconversion of serine and glycine with tetrahydrofolate (THF) serving as the one-carbon carrier. This reaction serves as the major source of one-carbon groups required for the biosynthesis of purines, thymidylate, methionine, and other important biomolecules. Also exhibits THF-independent aldolase activity toward beta-hydroxyamino acids, producing glycine and aldehydes, via a retro-aldol mechanism. This chain is Serine hydroxymethyltransferase, found in Thermotoga petrophila (strain ATCC BAA-488 / DSM 13995 / JCM 10881 / RKU-1).